A 260-amino-acid chain; its full sequence is Ribosomal RNA small subunit methyltransferase A (260 aa).

Leucine 23, glycine 48, glutamate 69, aspartate 94, and asparagine 110 together coordinate S-adenosyl-L-methionine.

Belongs to the class I-like SAM-binding methyltransferase superfamily. rRNA adenine N(6)-methyltransferase family. RsmA subfamily.

It is found in the cytoplasm. It catalyses the reaction adenosine(1518)/adenosine(1519) in 16S rRNA + 4 S-adenosyl-L-methionine = N(6)-dimethyladenosine(1518)/N(6)-dimethyladenosine(1519) in 16S rRNA + 4 S-adenosyl-L-homocysteine + 4 H(+). Its function is as follows. Specifically dimethylates two adjacent adenosines (A1518 and A1519) in the loop of a conserved hairpin near the 3'-end of 16S rRNA in the 30S particle. May play a critical role in biogenesis of 30S subunits. The sequence is that of Ribosomal RNA small subunit methyltransferase A from Thermotoga petrophila (strain ATCC BAA-488 / DSM 13995 / JCM 10881 / RKU-1).